We begin with the raw amino-acid sequence, 255 residues long: Imidazole glycerol phosphate synthase subunit HisF (255 aa).

Residues Asp11 and Asp130 contribute to the active site.

This sequence belongs to the HisA/HisF family. In terms of assembly, heterodimer of HisH and HisF.

It is found in the cytoplasm. It carries out the reaction 5-[(5-phospho-1-deoxy-D-ribulos-1-ylimino)methylamino]-1-(5-phospho-beta-D-ribosyl)imidazole-4-carboxamide + L-glutamine = D-erythro-1-(imidazol-4-yl)glycerol 3-phosphate + 5-amino-1-(5-phospho-beta-D-ribosyl)imidazole-4-carboxamide + L-glutamate + H(+). The protein operates within amino-acid biosynthesis; L-histidine biosynthesis; L-histidine from 5-phospho-alpha-D-ribose 1-diphosphate: step 5/9. IGPS catalyzes the conversion of PRFAR and glutamine to IGP, AICAR and glutamate. The HisF subunit catalyzes the cyclization activity that produces IGP and AICAR from PRFAR using the ammonia provided by the HisH subunit. This is Imidazole glycerol phosphate synthase subunit HisF from Syntrophotalea carbinolica (strain DSM 2380 / NBRC 103641 / GraBd1) (Pelobacter carbinolicus).